Here is a 108-residue protein sequence, read N- to C-terminus: Somatoliberin (108 aa).

The signal sequence occupies residues 1–20 (MPLWVFFFVILTLSNSSHCS). A propeptide spanning residues 21–31 (PPPPLTLRMRR) is cleaved from the precursor. Leucine 75 is modified (leucine amide). Residues 78–108 (QVDSMWAEQKQMELESILVALLQKHSRNSQG) constitute a propeptide that is removed on maturation.

The protein belongs to the glucagon family.

The protein resides in the secreted. Its function is as follows. GRF is released by the hypothalamus and acts on the adenohypophyse to stimulate the secretion of growth hormone. The chain is Somatoliberin (GHRH) from Homo sapiens (Human).